Here is a 427-residue protein sequence, read N- to C-terminus: Serine--tRNA ligase (427 aa).

231-233 contributes to the L-serine binding site; that stretch reads TAE. Residue 262–264 coordinates ATP; that stretch reads RSE. An L-serine-binding site is contributed by Glu285. 349–352 serves as a coordination point for ATP; sequence EISS. Ser385 serves as a coordination point for L-serine.

The protein belongs to the class-II aminoacyl-tRNA synthetase family. Type-1 seryl-tRNA synthetase subfamily. As to quaternary structure, homodimer. The tRNA molecule binds across the dimer.

It is found in the cytoplasm. The enzyme catalyses tRNA(Ser) + L-serine + ATP = L-seryl-tRNA(Ser) + AMP + diphosphate + H(+). It carries out the reaction tRNA(Sec) + L-serine + ATP = L-seryl-tRNA(Sec) + AMP + diphosphate + H(+). It functions in the pathway aminoacyl-tRNA biosynthesis; selenocysteinyl-tRNA(Sec) biosynthesis; L-seryl-tRNA(Sec) from L-serine and tRNA(Sec): step 1/1. Catalyzes the attachment of serine to tRNA(Ser). Is also able to aminoacylate tRNA(Sec) with serine, to form the misacylated tRNA L-seryl-tRNA(Sec), which will be further converted into selenocysteinyl-tRNA(Sec). In Brucella melitensis biotype 2 (strain ATCC 23457), this protein is Serine--tRNA ligase.